The following is a 218-amino-acid chain: GTP cyclohydrolase 1 (218 aa).

Positions 111, 114, and 182 each coordinate Zn(2+).

The protein belongs to the GTP cyclohydrolase I family. Toroid-shaped homodecamer, composed of two pentamers of five dimers.

It catalyses the reaction GTP + H2O = 7,8-dihydroneopterin 3'-triphosphate + formate + H(+). It participates in cofactor biosynthesis; 7,8-dihydroneopterin triphosphate biosynthesis; 7,8-dihydroneopterin triphosphate from GTP: step 1/1. In Buchnera aphidicola subsp. Schizaphis graminum (strain Sg), this protein is GTP cyclohydrolase 1.